The primary structure comprises 492 residues: Transmembrane protease serine 2 (492 aa).

The Cytoplasmic segment spans residues 1-84 (MALNSGSPPA…TVCTSKTKKA (84 aa)). A helical; Signal-anchor for type II membrane protein membrane pass occupies residues 85–105 (LCITLTLGTFLVGAALAAGLL). At 106–492 (WKFMGSKCSN…WIYRQMRADG (387 aa)) the chain is on the extracellular side. 9 disulfide bridges follow: cysteine 113/cysteine 126, cysteine 120/cysteine 139, cysteine 133/cysteine 148, cysteine 172/cysteine 231, cysteine 185/cysteine 241, cysteine 244/cysteine 365, cysteine 281/cysteine 297, cysteine 410/cysteine 426, and cysteine 437/cysteine 465. The 31-residue stretch at 118 to 148 (IECDSSGTCINPSNWCDGVSHCPGGEDENRC) folds into the LDL-receptor class A domain. Ca(2+) is bound by residues asparagine 131, aspartate 134, valine 136, aspartate 144, and glutamate 145. Residues 149-242 (VRLYGPNFIL…SKAVVSLRCI (94 aa)) form the SRCR domain. Asparagine 213 and asparagine 249 each carry an N-linked (GlcNAc...) asparagine glycan. The region spanning 256 to 492 (IVGGESALPG…WIYRQMRADG (237 aa)) is the Peptidase S1 domain. Active-site charge relay system residues include histidine 296 and aspartate 345. Positions 340-470 (KTKNNDIALM…WGSGCAKAYR (131 aa)) are HKU1-CoV S protein-binding. Residue serine 441 is the Charge relay system of the active site.

This sequence belongs to the peptidase S1 family. As to quaternary structure, the catalytically active form interacts with ACE2. Post-translationally, proteolytically processed; by an autocatalytic mechanism. Autocleavage induces active conformation. In terms of tissue distribution, expressed in several tissues that comprise large populations of epithelial cells with the highest level of transcripts measured in the prostate gland. Expressed in type II pneumocytes in the lung (at protein level). Expressed strongly in small intestine. Also expressed in colon, stomach and salivary gland. Coexpressed with ACE2 within lung type II pneumocytes, ileal absorptive enterocytes, intestinal epithelial cells, cornea, gallbladder and nasal goblet secretory cells.

The protein localises to the cell membrane. The protein resides in the secreted. The enzyme catalyses The enzyme cleaves angiotensin-converting enzyme 2 (EC 3.4.17.23) and cleaves influenzea A and B virus and coronavirus spike glycoproteins at arginine residues.. In terms of biological role, plasma membrane-anchored serine protease that cleaves at arginine residues. Participates in proteolytic cascades of relevance for the normal physiologic function of the prostate. Androgen-induced TMPRSS2 activates several substrates that include pro-hepatocyte growth factor/HGF, the protease activated receptor-2/F2RL1 or matriptase/ST14 leading to extracellular matrix disruption and metastasis of prostate cancer cells. In addition, activates trigeminal neurons and contribute to both spontaneous pain and mechanical allodynia. Its function is as follows. (Microbial infection) Facilitates human coronaviruses SARS-CoV and SARS-CoV-2 infections via two independent mechanisms, proteolytic cleavage of ACE2 receptor which promotes viral uptake, and cleavage of coronavirus spike glycoproteins which activates the glycoprotein for host cell entry. The cleavage of SARS-COV2 spike glycoprotein occurs between the S2 and S2' site. Upon SARS-CoV-2 infection, increases syncytia formation by accelerating the fusion process. Proteolytically cleaves and activates the spike glycoproteins of human coronavirus 229E (HCoV-229E) and human coronavirus EMC (HCoV-EMC) and the fusion glycoproteins F0 of Sendai virus (SeV), human metapneumovirus (HMPV), human parainfluenza 1, 2, 3, 4a and 4b viruses (HPIV). Essential for spread and pathogenesis of influenza A virus (strains H1N1, H3N2 and H7N9); involved in proteolytic cleavage and activation of hemagglutinin (HA) protein which is essential for viral infectivity. Functionally, (Microbial infection) Receptor for human coronavirus HKU1-CoV, acts synergistically with disialoside glycans to facilitate the entry of the virus. After binding to cell-surface disialoside glycans, the viral S protein interacts with the inactive form of TMPRSS2 and inhibits its protease activity. In Homo sapiens (Human), this protein is Transmembrane protease serine 2.